Reading from the N-terminus, the 435-residue chain is UDP-N-acetylmuramate--L-alanine ligase (435 aa).

108–114 contacts ATP; it reads GSHGKTS.

Belongs to the MurCDEF family.

It is found in the cytoplasm. It carries out the reaction UDP-N-acetyl-alpha-D-muramate + L-alanine + ATP = UDP-N-acetyl-alpha-D-muramoyl-L-alanine + ADP + phosphate + H(+). It participates in cell wall biogenesis; peptidoglycan biosynthesis. Its function is as follows. Cell wall formation. This is UDP-N-acetylmuramate--L-alanine ligase from Shouchella clausii (strain KSM-K16) (Alkalihalobacillus clausii).